A 441-amino-acid chain; its full sequence is Phosphoglucosamine mutase (441 aa).

The active-site Phosphoserine intermediate is serine 100. Positions 100, 239, 241, and 243 each coordinate Mg(2+). Serine 100 is subject to Phosphoserine.

The protein belongs to the phosphohexose mutase family. Mg(2+) serves as cofactor. Activated by phosphorylation.

The enzyme catalyses alpha-D-glucosamine 1-phosphate = D-glucosamine 6-phosphate. Functionally, catalyzes the conversion of glucosamine-6-phosphate to glucosamine-1-phosphate. The sequence is that of Phosphoglucosamine mutase from Ruthia magnifica subsp. Calyptogena magnifica.